The following is a 151-amino-acid chain: UPF0756 membrane protein Dred_1676 (151 aa).

Helical transmembrane passes span 9–29 (VILL…CASV), 47–67 (THGL…PIAT), 75–95 (LLYN…ILAT), and 111–131 (IIFG…GQPV).

Belongs to the UPF0756 family.

It localises to the cell membrane. This chain is UPF0756 membrane protein Dred_1676, found in Desulforamulus reducens (strain ATCC BAA-1160 / DSM 100696 / MI-1) (Desulfotomaculum reducens).